A 359-amino-acid polypeptide reads, in one-letter code: GalNAc-alpha-(1-&gt;4)-GalNAc-alpha-(1-&gt;3)-diNAcBac-PP-undecaprenol alpha-1,4-N-acetyl-D-galactosaminyltransferase (359 aa).

A substrate-binding site is contributed by Glu17. Tyr45 contributes to the UDP-N-acetyl-alpha-D-galactosamine binding site. 71–74 (RFKK) contributes to the substrate binding site. UDP-N-acetyl-alpha-D-galactosamine-binding positions include His117, Arg190, Lys195, Val246, and 266–274 (EGLPTVLIE). Arg190 lines the substrate pocket.

It belongs to the glycosyltransferase group 1 family.

It localises to the cell inner membrane. The catalysed reaction is N-acetyl-alpha-D-galactosaminyl-(1-&gt;4)-N-acetyl-alpha-D-galactosaminyl-(1-&gt;3)-N,N'-diacetyl-alpha-D-bacillosaminyl-tri-trans,heptacis-undecaprenyl diphosphate + 3 UDP-N-acetyl-alpha-D-galactosamine = [alpha-D-GalNAc-(1-&gt;4)]4-alpha-D-GalNAc-(1-&gt;3)-alpha-D-diNAcBac-tri-trans,hepta-cis-undecaprenyl diphosphate + 3 UDP + 3 H(+). It functions in the pathway protein modification; protein glycosylation. Functionally, processive glycosyltransferase that is part of the biosynthetic pathway of the lipid-linked oligosaccharide (LLO) that serves as the glycan donor in bacterial protein N-glycosylation. Catalyzes the transfer of exactly three alpha-(1-&gt;4)-N-acetylgalactosamine (GalNAc) units to the growing LLO precursor, GalNAc-alpha-(1-&gt;4)-GalNAc-alpha-(1-&gt;3)-diNAcBac-PP-undecaprenyl. Cannot accept UDP-GlcNAc as substrate. The protein is GalNAc-alpha-(1-&gt;4)-GalNAc-alpha-(1-&gt;3)-diNAcBac-PP-undecaprenol alpha-1,4-N-acetyl-D-galactosaminyltransferase of Campylobacter jejuni subsp. jejuni serotype O:2 (strain ATCC 700819 / NCTC 11168).